We begin with the raw amino-acid sequence, 141 residues long: Putative nickel-responsive regulator (141 aa).

The Ni(2+) site is built by His-80, His-91, His-93, and Cys-99.

The protein belongs to the transcriptional regulatory CopG/NikR family. As to quaternary structure, homotetramer. It depends on Ni(2+) as a cofactor.

Transcriptional regulator. The protein is Putative nickel-responsive regulator of Methanocaldococcus jannaschii (strain ATCC 43067 / DSM 2661 / JAL-1 / JCM 10045 / NBRC 100440) (Methanococcus jannaschii).